Here is a 407-residue protein sequence, read N- to C-terminus: ATP-citrate synthase subunit alpha chain protein 1 (407 aa).

Citrate-binding residues include N327, T329, and R360.

It belongs to the succinate/malate CoA ligase beta subunit family. As to quaternary structure, heterooctamer of 4 alpha and 4 beta chains.

Its subcellular location is the cytoplasm. The protein resides in the cytosol. It catalyses the reaction oxaloacetate + acetyl-CoA + ADP + phosphate = citrate + ATP + CoA. Functionally, ATP citrate-lyase is the primary enzyme responsible for the synthesis of cytosolic acetyl-CoA, used for the elongation of fatty acids and biosynthesis of isoprenoids, flavonoids and malonated derivatives. May supply substrate to the cytosolic acetyl-CoA carboxylase, which generates the malonyl-CoA used for the synthesis of a multitude of compounds, including very long chain fatty acids and flavonoids. In contrast to all known animal ACL enzymes having a homomeric structure, plant ACLs are composed of alpha and beta chains. This is ATP-citrate synthase subunit alpha chain protein 1 (ACLA-1) from Oryza sativa subsp. japonica (Rice).